The sequence spans 206 residues: Putative apoptosis inhibitor 021L (206 aa).

Polar residues predominate over residues 95–105 (TSKSPVSNQPS). Residues 95–114 (TSKSPVSNQPSPEEDEPIPD) are disordered. The RING-type zinc finger occupies 157–195 (CVVCQANVRNVVFVPCNHLATCISCSANPLMPKKCPMCR).

It belongs to the IIV-6 193R family.

Its function is as follows. Plays a role early in infection by preventing host cell apoptosis. The chain is Putative apoptosis inhibitor 021L from Aedes vexans (Inland floodwater mosquito).